The chain runs to 146 residues: Hemoglobin subunit beta (146 aa).

The Globin domain occupies 2 to 146; that stretch reads HWTAEEKQLI…VAHALARKYH (145 aa). Heme b is bound by residues H63 and H92.

It belongs to the globin family. In terms of assembly, heterotetramer of two alpha chains and two beta chains. Red blood cells.

Involved in oxygen transport from the lung to the various peripheral tissues. The sequence is that of Hemoglobin subunit beta (HBB) from Ciconia ciconia (White stork).